Reading from the N-terminus, the 250-residue chain is 2,3-bisphosphoglycerate-dependent phosphoglycerate mutase (250 aa).

Residues 10–17 (RHGESQWN), 23–24 (TG), arginine 62, 89–92 (ERHY), lysine 100, 116–117 (RR), and 185–186 (GN) contribute to the substrate site. Histidine 11 serves as the catalytic Tele-phosphohistidine intermediate. Residue glutamate 89 is the Proton donor/acceptor of the active site.

It belongs to the phosphoglycerate mutase family. BPG-dependent PGAM subfamily. Homodimer.

The enzyme catalyses (2R)-2-phosphoglycerate = (2R)-3-phosphoglycerate. It functions in the pathway carbohydrate degradation; glycolysis; pyruvate from D-glyceraldehyde 3-phosphate: step 3/5. Functionally, catalyzes the interconversion of 2-phosphoglycerate and 3-phosphoglycerate. In Salmonella choleraesuis (strain SC-B67), this protein is 2,3-bisphosphoglycerate-dependent phosphoglycerate mutase.